Consider the following 138-residue polypeptide: Transcriptional activator protein (138 aa).

A compositionally biased stretch (low complexity) spans 1 to 20; that stretch reads MTGSKKTPSTSPSKKLSSPP. A disordered region spans residues 1–23; that stretch reads MTGSKKTPSTSPSKKLSSPPEVK. The short motif at 23-37 is the Nuclear localization signal element; it reads KLRHRFAKRQIRRRR. The segment at 42 to 59 is a zinc-finger region; the sequence is CGCSIYIHINCVNNGFTH. Over residues 85-106 the composition is skewed to polar residues; that stretch reads NTASGDANVHTQPGISHSSQSK. The segment at 85–123 is disordered; that stretch reads NTASGDANVHTQPGISHSSQSKPQHEDSVGSPQSLLQLP. Positions 113 to 123 are enriched in low complexity; sequence VGSPQSLLQLP. The tract at residues 124–138 is transactivation; that stretch reads SLDDVDDDFWADLLK.

It belongs to the geminiviridae transcriptional activator protein family. In terms of assembly, monomer. Homodimer. Homooligomer. Self-interaction correlates with nuclear localization and efficient activation of transcription. Monomers suppress local silencing by interacting with and inactivating host adenosine kinase 2 (ADK2) in the cytoplasm. Interacts with and inhibits host SNF1 kinase. Binds to ssDNA. In terms of processing, phosphorylated.

Its subcellular location is the host nucleus. It localises to the host cytoplasm. In terms of biological role, strong activator of the late viral genes promoters. Enhances the expression of the capsid protein and nuclear shuttle protein. Acts as a suppressor of RNA-mediated gene silencing, also known as post-transcriptional gene silencing (PTGS), a mechanism of plant viral defense that limits the accumulation of viral RNAs. Suppresses the host RNA silencing by inhibiting adenosine kinase 2 (ADK2), a kinase involved in a general methylation pathway. Also suppresses the host basal defense by interacting with and inhibiting SNF1 kinase, a key regulator of cell metabolism implicated in innate antiviral defense. Determines pathogenicity. The polypeptide is Transcriptional activator protein (Pepper huasteco yellow vein virus (PHYVV)).